The following is a 73-amino-acid chain: Ubiquitin-like protein 5 (73 aa).

Residues 1 to 73 (MIEITCNDRL…DGMNLELYYQ (73 aa)) form the Ubiquitin-like domain.

The protein localises to the cytoplasm. The sequence is that of Ubiquitin-like protein 5 (ubl) from Drosophila melanogaster (Fruit fly).